The following is a 500-amino-acid chain: NAD(P)H-quinone oxidoreductase chain 4, chloroplastic (500 aa).

14 helical membrane passes run 4-24 (FPWLTIIVVLPIFAGSSIFFL), 37-57 (ICICLLELLLTTYTFCYHFQL), 84-104 (GLSIGPILLTGFITTLATLAA), 111-129 (SRLFHFLMLAMYSGQIGSF), 134-154 (LLLFFIMWELELIPVYLLLSM), 167-187 (FILYTAGGSIFLLMGIPGMGL), 208-228 (ALEILFYFGFLIAYAVKSPII), 242-262 (HYSTCMLLAGILLKMGAYGLV), 272-292 (AHSIFSPWLMIVGTIQVIYAA), 305-325 (IAYSSVSHMAFIIIGIGSITD), 330-350 (GAILQIISHGFIGAALFFLAG), 374-396 (IFTMFSSFSMASLALPGMSGFVA), 411-431 (FFMPKILITFVMAIGMILTPI), and 462-482 (LFVSICIFLPVIGIGIYPDFV).

This sequence belongs to the complex I subunit 4 family.

The protein localises to the plastid. It is found in the chloroplast thylakoid membrane. The enzyme catalyses a plastoquinone + NADH + (n+1) H(+)(in) = a plastoquinol + NAD(+) + n H(+)(out). It catalyses the reaction a plastoquinone + NADPH + (n+1) H(+)(in) = a plastoquinol + NADP(+) + n H(+)(out). The sequence is that of NAD(P)H-quinone oxidoreductase chain 4, chloroplastic from Chloranthus spicatus (Chulantree).